The chain runs to 520 residues: GMP synthase [glutamine-hydrolyzing] (520 aa).

One can recognise a Glutamine amidotransferase type-1 domain in the interval 9 to 202 (SVLIVDFGSQ…IHNVAGIKGD (194 aa)). C86 (nucleophile) is an active-site residue. Residues H176 and E178 contribute to the active site. Residues 203–395 (WSMSAYRQKA…LGLPDSFIGR (193 aa)) enclose the GMPS ATP-PPase domain. 230-236 (SGGVDSS) provides a ligand contact to ATP.

In terms of assembly, homodimer.

It catalyses the reaction XMP + L-glutamine + ATP + H2O = GMP + L-glutamate + AMP + diphosphate + 2 H(+). The protein operates within purine metabolism; GMP biosynthesis; GMP from XMP (L-Gln route): step 1/1. Catalyzes the synthesis of GMP from XMP. The protein is GMP synthase [glutamine-hydrolyzing] of Rhizobium etli (strain ATCC 51251 / DSM 11541 / JCM 21823 / NBRC 15573 / CFN 42).